The sequence spans 420 residues: Putative movement protein (420 aa).

2 stretches are compositionally biased toward low complexity: residues 1–18 (MPLT…TSFS) and 30–59 (TSCS…GSCP). Disordered regions lie at residues 1–77 (MPLT…TARP), 137–181 (SMSR…SARS), 195–219 (RPKT…STRT), 235–281 (IMSE…RPPP), 327–370 (PSAG…RPIQ), and 396–420 (LPPP…QPWP). Pro residues predominate over residues 60–69 (KTPPGTPPLP). A compositionally biased stretch (polar residues) spans 137–157 (SMSRRATQPPTTRSRVRPSTG). The span at 158-181 (SRPPVSPLVTSSSPSPFSTLSARS) shows a compositional bias: low complexity. Residues 253–263 (GLRSASLSTAG) show a composition bias toward polar residues. Over residues 327–348 (PSAGSSPFTPTVSGCSASTSSA) the composition is skewed to low complexity.

Functionally, cell-to-cell movement. The chain is Putative movement protein from Maize rayado fino virus (isolate Costa Rica/Guapiles) (MRFV).